A 316-amino-acid polypeptide reads, in one-letter code: Endochitinase 2 (316 aa).

An N-terminal signal peptide occupies residues 1–18 (EFTTLFLLFSVLLLSASA). Residues 19-60 (EQCGSQAGGALCASGLCCSKFGWCGNTNDYCGPGNCQSQCPG) form the Chitin-binding type-1 domain. Cystine bridges form between Cys-21–Cys-36, Cys-30–Cys-42, Cys-35–Cys-49, Cys-54–Cys-58, Cys-87–Cys-150, Cys-162–Cys-170, and Cys-269–Cys-301. Glu-132 acts as the Proton donor in catalysis. The propeptide at 310–316 (GLLVDTV) is removed in mature form, vacuolar targeting.

Belongs to the glycosyl hydrolase 19 family. Chitinase class I subfamily.

It is found in the vacuole. The catalysed reaction is Random endo-hydrolysis of N-acetyl-beta-D-glucosaminide (1-&gt;4)-beta-linkages in chitin and chitodextrins.. Its function is as follows. Defense against chitin-containing fungal pathogens. This is Endochitinase 2 (CHTB2) from Solanum tuberosum (Potato).